Here is a 308-residue protein sequence, read N- to C-terminus: Protoheme IX farnesyltransferase (308 aa).

Helical transmembrane passes span 20-40 (VLAYLALTKPRVIELLLVTAI), 53-73 (PLLILNTLLGGISAAAGANTF), 102-122 (NALVLGLALTAGSFFWLWWTT), 124-144 (LLSGLLALATVAFYVFVYTLL), 149-169 (TSQNVVWGGAAGCMPVMIGWS), 170-190 (AITDTIGWPALAMFAIIFFWT), 227-249 (LIYTWLTALSTLVLALATGWLYM), 254-276 (VAGAWFLTMAHQLYVGVCAGEPV), and 288-308 (YLAVVFCALAVDSVLALPTLF).

Belongs to the UbiA prenyltransferase family. Protoheme IX farnesyltransferase subfamily.

It localises to the cell membrane. The catalysed reaction is heme b + (2E,6E)-farnesyl diphosphate + H2O = Fe(II)-heme o + diphosphate. It participates in porphyrin-containing compound metabolism; heme O biosynthesis; heme O from protoheme: step 1/1. Its function is as follows. Converts heme B (protoheme IX) to heme O by substitution of the vinyl group on carbon 2 of heme B porphyrin ring with a hydroxyethyl farnesyl side group. This Mycobacterium leprae (strain TN) protein is Protoheme IX farnesyltransferase.